The chain runs to 253 residues: Chloride intracellular channel protein 4 (253 aa).

Alanine 2 bears the N-acetylalanine mark. The tract at residues 2 to 101 (ALSMPLNGLK…EEFLEEVLCP (100 aa)) is required for insertion into the membrane. Serine 4 is subject to Phosphoserine. Residue lysine 24 is modified to N6-acetyllysine. Residues 35–38 (CPFS) carry the G-site motif. The chain crosses the membrane as a helical span at residues 37 to 57 (FSQRLFMILWLKGVVFSVTTV). One can recognise a GST C-terminal domain in the interval 81 to 244 (NSEVKTDVNK…PSDKEVEIAY (164 aa)). Residue lysine 130 is modified to N6-acetyllysine. Phosphoserine occurs at positions 132, 167, and 236. Residue tyrosine 244 is modified to Phosphotyrosine.

This sequence belongs to the chloride channel CLIC family. Monomer. Interacts with HRH30. Interacts with AKAP9. In terms of tissue distribution, detected in blood vessels in the retina (at protein level). Expressed to the greatest extent in vivo in heart, lung, liver, kidney, and skin.

The protein resides in the cytoplasm. It is found in the cytoskeleton. The protein localises to the microtubule organizing center. Its subcellular location is the centrosome. It localises to the cytoplasmic vesicle membrane. The protein resides in the nucleus. It is found in the cell membrane. The protein localises to the mitochondrion. Its subcellular location is the cell junction. The enzyme catalyses chloride(in) = chloride(out). It catalyses the reaction thiocyanate(in) = thiocyanate(out). The catalysed reaction is nitrate(in) = nitrate(out). It carries out the reaction iodide(out) = iodide(in). The enzyme catalyses bromide(in) = bromide(out). It catalyses the reaction fluoride(in) = fluoride(out). The catalysed reaction is choline(out) = choline(in). In terms of biological role, in the soluble state, catalyzes glutaredoxin-like thiol disulfide exchange reactions with reduced glutathione as electron donor. Can insert into membranes and form voltage-dependent multi-ion conductive channels. Membrane insertion seems to be redox-regulated and may occur only under oxidizing conditions. Has alternate cellular functions like a potential role in angiogenesis or in maintaining apical-basolateral membrane polarity during mitosis and cytokinesis. Could also promote endothelial cell proliferation and regulate endothelial morphogenesis (tubulogenesis). Promotes cell-surface expression of HRH3. The chain is Chloride intracellular channel protein 4 (Clic4) from Mus musculus (Mouse).